Reading from the N-terminus, the 460-residue chain is Muscarinic acetylcholine receptor M1 (460 aa).

Over 1–22 the chain is Extracellular; sequence MNTSAPPAVSPNITVLAPGKGP. Asn-2 and Asn-12 each carry an N-linked (GlcNAc...) asparagine glycan. The helical transmembrane segment at 23–48 threads the bilayer; sequence WQVAFIGITTGLLSLATVTGNLLVLI. Over 49-62 the chain is Cytoplasmic; sequence SFKVNTELKTVNNY. Residues 63–84 traverse the membrane as a helical segment; that stretch reads FLLSLACADLIIGTFSMNLYTT. The Extracellular segment spans residues 85-95; sequence YLLMGHWALGT. Residues 96 to 121 form a helical membrane-spanning segment; that stretch reads LACDLWLALDYVASNASVMNLLLISF. A disulfide bridge links Cys-98 with Cys-178. Residues 122 to 142 are Cytoplasmic-facing; it reads DRYFSVTRPLSYRAKRTPRRA. Residues 143–164 form a helical membrane-spanning segment; the sequence is ALMIGLAWLVSFVLWAPAILFW. Residues 165-185 are Extracellular-facing; that stretch reads QYLVGERTVLAGQCYIQFLSQ. Residues 186 to 209 traverse the membrane as a helical segment; the sequence is PIITFGTAMAAFYLPVTVMCTLYW. At 210–366 the chain is on the cytoplasmic side; the sequence is RIYRETENRA…LVKEKKAART (157 aa). 3 disordered regions span residues 225–256, 274–297, and 310–351; these read LQGSETPGKGGGSSSSSERSQPGAEGSPETPP, WKEEEEEDEGSMESLTSSEGEEPG, and EAQA…QLAK. At Thr-230 the chain carries Phosphothreonine. The segment covering 238 to 247 has biased composition (low complexity); that stretch reads SSSSERSQPG. The span at 328 to 343 shows a compositional bias: basic residues; the sequence is RPTKKGRDRAGKGQKP. Residues 367-390 traverse the membrane as a helical segment; it reads LSAILLAFILTWTPYNIMVLVSTF. Residues 391-397 are Extracellular-facing; that stretch reads CKDCVPE. The helical transmembrane segment at 398-420 threads the bilayer; the sequence is TLWELGYWLCYVNSTINPMCYAL. Topologically, residues 421 to 460 are cytoplasmic; it reads CNKAFRDTFRLLLLCRWDKRRWRKIPKRPGSVHRTPSRQC. Position 428 is a phosphothreonine (Thr-428). Ser-451 carries the post-translational modification Phosphoserine. Thr-455 is subject to Phosphothreonine. Ser-457 carries the post-translational modification Phosphoserine.

Belongs to the G-protein coupled receptor 1 family. Muscarinic acetylcholine receptor subfamily. CHRM1 sub-subfamily. In terms of assembly, interacts with GPRASP2. Interacts with TMEM147.

The protein localises to the cell membrane. The protein resides in the postsynaptic cell membrane. In terms of biological role, the muscarinic acetylcholine receptor mediates various cellular responses, including inhibition of adenylate cyclase, breakdown of phosphoinositides and modulation of potassium channels through the action of G proteins. Primary transducing effect is Pi turnover. This chain is Muscarinic acetylcholine receptor M1 (CHRM1), found in Homo sapiens (Human).